Here is a 493-residue protein sequence, read N- to C-terminus: uncharacterized protein (493 aa).

Residues 316 to 403 are disordered; sequence LNMVNFGPDD…NSVDNSVHDS (88 aa). The span at 338-353 shows a compositional bias: low complexity; it reads ESQNNSESNSESITES. A compositionally biased stretch (polar residues) spans 371–398; sequence SQDNDTVQIDKSTSSDSVHNYFDNSVDN.

This sequence belongs to the mimivirus R69 family.

This is an uncharacterized protein from Acanthamoeba polyphaga (Amoeba).